The primary structure comprises 372 residues: N-methyl-L-tryptophan oxidase (372 aa).

An FAD-binding site is contributed by 4-34 (DLIIIGSGSVGAAAGYYATRAGLNVLMTDAH). Residue Cys-308 is modified to S-8alpha-FAD cysteine.

This sequence belongs to the MSOX/MTOX family. MTOX subfamily. In terms of assembly, monomer. It depends on FAD as a cofactor.

It carries out the reaction N(alpha)-methyl-L-tryptophan + O2 + H2O = L-tryptophan + formaldehyde + H2O2. Catalyzes the oxidative demethylation of N-methyl-L-tryptophan. The sequence is that of N-methyl-L-tryptophan oxidase from Escherichia coli O9:H4 (strain HS).